We begin with the raw amino-acid sequence, 233 residues long: 7-cyano-7-deazaguanine synthase (233 aa).

13 to 23 (LSGGLDSTTCL) contacts ATP. 4 residues coordinate Zn(2+): Cys-197, Cys-206, Cys-209, and Cys-212.

The protein belongs to the QueC family. It depends on Zn(2+) as a cofactor.

It carries out the reaction 7-carboxy-7-deazaguanine + NH4(+) + ATP = 7-cyano-7-deazaguanine + ADP + phosphate + H2O + H(+). It participates in purine metabolism; 7-cyano-7-deazaguanine biosynthesis. Functionally, catalyzes the ATP-dependent conversion of 7-carboxy-7-deazaguanine (CDG) to 7-cyano-7-deazaguanine (preQ(0)). The protein is 7-cyano-7-deazaguanine synthase of Anaeromyxobacter sp. (strain Fw109-5).